The chain runs to 1052 residues: Isoleucine--tRNA ligase (1052 aa).

The 'HIGH' region signature appears at 58–68; sequence PFANGLPHYGH. The short motif at 627–631 is the 'KMSKS' region element; it reads KMSKS. Lysine 630 contacts ATP.

It belongs to the class-I aminoacyl-tRNA synthetase family. IleS type 2 subfamily. Monomer. Zn(2+) is required as a cofactor.

The protein localises to the cytoplasm. It carries out the reaction tRNA(Ile) + L-isoleucine + ATP = L-isoleucyl-tRNA(Ile) + AMP + diphosphate. Its function is as follows. Catalyzes the attachment of isoleucine to tRNA(Ile). As IleRS can inadvertently accommodate and process structurally similar amino acids such as valine, to avoid such errors it has two additional distinct tRNA(Ile)-dependent editing activities. One activity is designated as 'pretransfer' editing and involves the hydrolysis of activated Val-AMP. The other activity is designated 'posttransfer' editing and involves deacylation of mischarged Val-tRNA(Ile). The sequence is that of Isoleucine--tRNA ligase from Corynebacterium diphtheriae (strain ATCC 700971 / NCTC 13129 / Biotype gravis).